A 462-amino-acid polypeptide reads, in one-letter code: Serine carboxypeptidase-like 28 (462 aa).

The signal sequence occupies residues 1–26 (MMITKKLYQCMCLLCMVIALLDVVSS). Residues asparagine 49 and asparagine 144 are each glycosylated (N-linked (GlcNAc...) asparagine). 3 disulfide bridges follow: cysteine 93/cysteine 342, cysteine 254/cysteine 266, and cysteine 290/cysteine 311. Serine 186 is a catalytic residue. An N-linked (GlcNAc...) asparagine glycan is attached at asparagine 256. Residue asparagine 334 is glycosylated (N-linked (GlcNAc...) asparagine). Catalysis depends on residues aspartate 379 and histidine 434. Residue asparagine 454 is glycosylated (N-linked (GlcNAc...) asparagine).

This sequence belongs to the peptidase S10 family. In terms of tissue distribution, expressed in seedlings, roots and senescent leaves.

It localises to the secreted. Probable carboxypeptidase. This is Serine carboxypeptidase-like 28 (SCPL28) from Arabidopsis thaliana (Mouse-ear cress).